Consider the following 154-residue polypeptide: MSEQCPCGSTLEYQRCCEPYIMGTEIAAKPSILMRSRYSAYVKKNVDYLIATWHPDCNAEQWRDGIIQSFSNTTWQGLTVIAEMAGDHDNEAFVEFIARFKDANSTQVSAMHERSRFLRIKEHWYYIDGIRPSVGRNDTCPCGSGKKYKKCCGR.

It belongs to the UPF0225 family.

This Yersinia enterocolitica serotype O:8 / biotype 1B (strain NCTC 13174 / 8081) protein is UPF0225 protein YE2246.